Reading from the N-terminus, the 125-residue chain is uncharacterized protein (125 aa).

The next 3 helical transmembrane spans lie at 20 to 42 (RNGG…LTIL), 57 to 76 (LMNA…GVVV), and 81 to 103 (YLFV…YMAS).

The protein resides in the cell membrane. This is an uncharacterized protein from Archaeoglobus fulgidus (strain ATCC 49558 / DSM 4304 / JCM 9628 / NBRC 100126 / VC-16).